Reading from the N-terminus, the 500-residue chain is Coiled-coil domain-containing protein 125 (500 aa).

A disordered region spans residues 1–105 (MSKVPRSSSE…TDSNSELSDE (105 aa)). Acidic residues predominate over residues 10–23 (EAEDIWETEDDMTE). Positions 92–101 (RLSSTDSNSE) are enriched in polar residues. 2 coiled-coil regions span residues 101 to 237 (ELSD…LEAL) and 286 to 314 (STRK…TADA). The residue at position 492 (serine 492) is a Phosphoserine.

Expressed in many tissues, with highest levels in spleen, thymus and bone marrow.

Its subcellular location is the cytoplasm. Its function is as follows. May be involved in the regulation of cell migration. The chain is Coiled-coil domain-containing protein 125 (Ccdc125) from Mus musculus (Mouse).